The chain runs to 261 residues: MAVGKNKRISKGKKGGKKKAADPFAKKDWYDIKAPSVFEVRNVGKTLVSRTQGTKIASEGLKHRVFEISLADLQADEDQAYRKIRLRAEDVQGRNVLTNFWGMDFTTDKLRSLVRKWQTLIEAHVDVKTTDNYTLRLFCIAFTKKRVNQNKKTCYAQSSQIRQIRRKMREIMTNMATSCDLKELVKKFIPESIGREIEKATSSIYPLQNVYIRKVKILKAPKFDLGKLMEVHGDYSEDVGTKLERPADEPVAEGVTEVIGA.

The segment covering 1 to 18 (MAVGKNKRISKGKKGGKK) has biased composition (basic residues). A disordered region spans residues 1–20 (MAVGKNKRISKGKKGGKKKA).

This sequence belongs to the eukaryotic ribosomal protein eS1 family. Component of the small ribosomal subunit. Mature ribosomes consist of a small (40S) and a large (60S) subunit. The 40S subunit contains about 33 different proteins and 1 molecule of RNA (18S). The 60S subunit contains about 49 different proteins and 3 molecules of RNA (25S, 5.8S and 5S).

The protein resides in the cytoplasm. This Vitis vinifera (Grape) protein is Small ribosomal subunit protein eS1z.